A 138-amino-acid chain; its full sequence is Ribosome-binding factor A (138 aa).

This sequence belongs to the RbfA family. Monomer. Binds 30S ribosomal subunits, but not 50S ribosomal subunits or 70S ribosomes.

Its subcellular location is the cytoplasm. Its function is as follows. One of several proteins that assist in the late maturation steps of the functional core of the 30S ribosomal subunit. Associates with free 30S ribosomal subunits (but not with 30S subunits that are part of 70S ribosomes or polysomes). Required for efficient processing of 16S rRNA. May interact with the 5'-terminal helix region of 16S rRNA. The polypeptide is Ribosome-binding factor A (Chromobacterium violaceum (strain ATCC 12472 / DSM 30191 / JCM 1249 / CCUG 213 / NBRC 12614 / NCIMB 9131 / NCTC 9757 / MK)).